The following is a 387-amino-acid chain: Succinate--CoA ligase [ADP-forming] subunit beta (387 aa).

Residues 9–236 (KELFAKHNVP…KDATDPLELK (228 aa)) form the ATP-grasp domain. Residues K45, 52–54 (GRG), S94, and E99 contribute to the ATP site. Residues N191 and D205 each contribute to the Mg(2+) site. Substrate-binding positions include N256 and 318 to 320 (GIT).

It belongs to the succinate/malate CoA ligase beta subunit family. Heterotetramer of two alpha and two beta subunits. It depends on Mg(2+) as a cofactor.

The catalysed reaction is succinate + ATP + CoA = succinyl-CoA + ADP + phosphate. It catalyses the reaction GTP + succinate + CoA = succinyl-CoA + GDP + phosphate. It functions in the pathway carbohydrate metabolism; tricarboxylic acid cycle; succinate from succinyl-CoA (ligase route): step 1/1. Succinyl-CoA synthetase functions in the citric acid cycle (TCA), coupling the hydrolysis of succinyl-CoA to the synthesis of either ATP or GTP and thus represents the only step of substrate-level phosphorylation in the TCA. The beta subunit provides nucleotide specificity of the enzyme and binds the substrate succinate, while the binding sites for coenzyme A and phosphate are found in the alpha subunit. This Mycolicibacterium vanbaalenii (strain DSM 7251 / JCM 13017 / BCRC 16820 / KCTC 9966 / NRRL B-24157 / PYR-1) (Mycobacterium vanbaalenii) protein is Succinate--CoA ligase [ADP-forming] subunit beta.